A 331-amino-acid polypeptide reads, in one-letter code: Glucokinase (331 aa).

16–21 (GDIGGT) contacts ATP.

This sequence belongs to the bacterial glucokinase family.

It localises to the cytoplasm. The catalysed reaction is D-glucose + ATP = D-glucose 6-phosphate + ADP + H(+). The sequence is that of Glucokinase from Pseudomonas aeruginosa (strain UCBPP-PA14).